A 62-amino-acid chain; its full sequence is UPF0434 protein Avi_4243 (62 aa).

It belongs to the UPF0434 family.

This chain is UPF0434 protein Avi_4243, found in Allorhizobium ampelinum (strain ATCC BAA-846 / DSM 112012 / S4) (Agrobacterium vitis (strain S4)).